Here is a 204-residue protein sequence, read N- to C-terminus: N-(5'-phosphoribosyl)anthranilate isomerase (204 aa).

This sequence belongs to the TrpF family.

The enzyme catalyses N-(5-phospho-beta-D-ribosyl)anthranilate = 1-(2-carboxyphenylamino)-1-deoxy-D-ribulose 5-phosphate. The protein operates within amino-acid biosynthesis; L-tryptophan biosynthesis; L-tryptophan from chorismate: step 3/5. The protein is N-(5'-phosphoribosyl)anthranilate isomerase of Bacillus cereus (strain G9842).